We begin with the raw amino-acid sequence, 415 residues long: Transposase for insertion sequence element IS1081 (415 aa).

This sequence belongs to the transposase mutator family.

Its function is as follows. Required for the transposition of the insertion element. The sequence is that of Transposase for insertion sequence element IS1081 from Mycobacterium bovis (strain ATCC BAA-935 / AF2122/97).